The sequence spans 160 residues: 3-hydroxyacyl-[acyl-carrier-protein] dehydratase FabZ (160 aa).

H58 is a catalytic residue.

It belongs to the thioester dehydratase family. FabZ subfamily.

It localises to the cytoplasm. The enzyme catalyses a (3R)-hydroxyacyl-[ACP] = a (2E)-enoyl-[ACP] + H2O. Its function is as follows. Involved in unsaturated fatty acids biosynthesis. Catalyzes the dehydration of short chain beta-hydroxyacyl-ACPs and long chain saturated and unsaturated beta-hydroxyacyl-ACPs. The polypeptide is 3-hydroxyacyl-[acyl-carrier-protein] dehydratase FabZ (Ruegeria sp. (strain TM1040) (Silicibacter sp.)).